Here is a 193-residue protein sequence, read N- to C-terminus: 3-isopropylmalate dehydratase small subunit (193 aa).

The protein belongs to the LeuD family. LeuD type 1 subfamily. In terms of assembly, heterodimer of LeuC and LeuD.

It carries out the reaction (2R,3S)-3-isopropylmalate = (2S)-2-isopropylmalate. The protein operates within amino-acid biosynthesis; L-leucine biosynthesis; L-leucine from 3-methyl-2-oxobutanoate: step 2/4. Functionally, catalyzes the isomerization between 2-isopropylmalate and 3-isopropylmalate, via the formation of 2-isopropylmaleate. In Bacillus cereus (strain 03BB102), this protein is 3-isopropylmalate dehydratase small subunit.